The following is a 213-amino-acid chain: Uracil phosphoribosyltransferase (213 aa).

5-phospho-alpha-D-ribose 1-diphosphate-binding positions include Arg78, Arg103, and 131-139; that span reads DPMLATGGT. Uracil-binding positions include Ile197 and 202–204; that span reads GDA. Asp203 serves as a coordination point for 5-phospho-alpha-D-ribose 1-diphosphate.

This sequence belongs to the UPRTase family. Requires Mg(2+) as cofactor.

The catalysed reaction is UMP + diphosphate = 5-phospho-alpha-D-ribose 1-diphosphate + uracil. It functions in the pathway pyrimidine metabolism; UMP biosynthesis via salvage pathway; UMP from uracil: step 1/1. Its activity is regulated as follows. Allosterically activated by GTP. Catalyzes the conversion of uracil and 5-phospho-alpha-D-ribose 1-diphosphate (PRPP) to UMP and diphosphate. The polypeptide is Uracil phosphoribosyltransferase (Bifidobacterium adolescentis (strain ATCC 15703 / DSM 20083 / NCTC 11814 / E194a)).